The sequence spans 500 residues: Cytochrome P450 71B38 (500 aa).

A helical membrane pass occupies residues 3-23 (IFLCFLLLLPLSLILFKKLLP). Cys-441 is a heme binding site.

It belongs to the cytochrome P450 family. The cofactor is heme.

The protein localises to the membrane. This chain is Cytochrome P450 71B38 (CYP71B38), found in Arabidopsis thaliana (Mouse-ear cress).